A 551-amino-acid chain; its full sequence is Transcription factor 7-like 1-B (551 aa).

A compositionally biased stretch (gly residues) spans 1–11 (MPQLNGGGGDE). Disordered regions lie at residues 1–76 (MPQL…DLES), 298–326 (QEPN…KPHI), and 392–525 (GWSA…PPSP). Over residues 19–32 (ISFKDEGEQEDKIS) the composition is skewed to basic and acidic residues. The span at 46–61 (SSLVSESENNSSSSDS) shows a compositional bias: low complexity. Positions 63-76 (QTERRPQPRADLES) are enriched in basic and acidic residues. Residues 326–394 (IKKPLNAFML…LHSQLYPGWS (69 aa)) constitute a DNA-binding region (HMG box). A compositionally biased stretch (low complexity) spans 449 to 468 (SPATPSAALASPAAPAATHS). Residues 469–478 (EQAQPLSLTT) show a composition bias toward polar residues. Residues 493–505 (SSSSSSSSSSSGL) are compositionally biased toward low complexity.

This sequence belongs to the TCF/LEF family. As to quaternary structure, interacts with ctnnb1.

The protein localises to the nucleus. Functionally, participates in the Wnt signaling pathway. Probably binds to DNA and acts as a repressor in the absence of ctnnb1, and possibly as an activator in its presence. Regulates anterior-posterior patterning in the neuroectoderm by repressing posterior neural fates. Also required for hindbrain morphogenesis. The polypeptide is Transcription factor 7-like 1-B (tcf7l1b) (Danio rerio (Zebrafish)).